The following is a 215-amino-acid chain: MKLYIYDHCPYCLKARMIFGLKNIPVELHVLLNDDAETPTRMVGQKQVPILQKDDSRYMPESMDIVHYVDKLDGKPLLTGKRSPAIEEWLRKVNGYANKLLLPRFAKSAFDEFSTPAARKYFVDKKEASAGNFADLLAHSDGLIKNISDDLRALDKLIVKPNAVNGELSEDDIQLFPLLRNLTLVAGINWPSRVADYRDNMAKQTQINLLSSMAI.

Residues methionine 1–leucine 77 form the GST N-terminal domain. Cysteine 9 and cysteine 12 are joined by a disulfide.

Belongs to the glutaredoxin family.

Involved in reducing some disulfides in a coupled system with glutathione reductase. Does not act as hydrogen donor for ribonucleotide reductase. The sequence is that of Glutaredoxin 2 (grxB) from Escherichia coli O157:H7.